The chain runs to 713 residues: RNA-binding protein vts1 (713 aa).

The span at 154–188 (NSGLSLDKSLPSSPKGDSPSLSSSLPSLTTKSNLS) shows a compositional bias: low complexity. Disordered stretches follow at residues 154–208 (NSGL…SSKH), 254–336 (EPPA…RDRG), 356–389 (DESS…SRPL), 554–596 (EKIE…GNEL), and 667–713 (KAAK…SSMD). Composition is skewed to polar residues over residues 189 to 208 (GNLN…SSKH) and 258 to 281 (SSAS…NANV). Low complexity-rich tracts occupy residues 282–297 (TSSL…SKTT) and 304–320 (SKKS…PNTS). A compositionally biased stretch (polar residues) spans 321–330 (FFETPHNNIW). Residues 369–378 (SPPPPPPPPE) are compositionally biased toward pro residues. The segment covering 559–569 (PPNNSKNQTYR) has biased composition (polar residues). Basic residues predominate over residues 570 to 583 (RSSRGSNKTRKSIS). In terms of domain architecture, SAM spans 595–656 (ELPQDIPSWL…LKSFQEVAPL (62 aa)). Polar residues predominate over residues 670–681 (KNQSSESLTSFK). At serine 673 the chain carries Phosphoserine. The segment covering 691 to 702 (SGSMSNEISSNS) has biased composition (low complexity). The segment covering 703 to 713 (TKQDVSSSSMD) has biased composition (polar residues).

The protein belongs to the VTS1 family. As to quaternary structure, monomer. Binds to RNA.

Its subcellular location is the cytoplasm. The protein resides in the cytosol. The protein localises to the P-body. In terms of biological role, RNA-binding protein involved in post-transcriptional regulation through transcript degradation. This is RNA-binding protein vts1 from Schizosaccharomyces pombe (strain 972 / ATCC 24843) (Fission yeast).